The following is a 561-amino-acid chain: Arginine--tRNA ligase (561 aa).

The short motif at 123-133 (PNIAKDMHVGH) is the 'HIGH' region element.

It belongs to the class-I aminoacyl-tRNA synthetase family. Monomer.

It localises to the cytoplasm. The enzyme catalyses tRNA(Arg) + L-arginine + ATP = L-arginyl-tRNA(Arg) + AMP + diphosphate. This is Arginine--tRNA ligase (argS) from Chlamydia pneumoniae (Chlamydophila pneumoniae).